Here is a 456-residue protein sequence, read N- to C-terminus: Bifunctional protein GlmU (456 aa).

The segment at 1-229 is pyrophosphorylase; the sequence is MLNNAMSVVI…LSEVEGVNNR (229 aa). Residues 11 to 14, lysine 25, glutamine 76, 81 to 82, 103 to 105, glycine 140, glutamate 154, asparagine 169, and asparagine 227 contribute to the UDP-N-acetyl-alpha-D-glucosamine site; these read LAAG, GT, and YGD. Aspartate 105 serves as a coordination point for Mg(2+). Asparagine 227 lines the Mg(2+) pocket. Positions 230-250 are linker; the sequence is LQLSRLERVYQSEQAEKLLLA. Residues 251 to 456 form an N-acetyltransferase region; that stretch reads GVMLRDPARF…EGWRRPVKKK (206 aa). Positions 333 and 351 each coordinate UDP-N-acetyl-alpha-D-glucosamine. Histidine 363 functions as the Proton acceptor in the catalytic mechanism. The UDP-N-acetyl-alpha-D-glucosamine site is built by tyrosine 366 and asparagine 377. Residues alanine 380, 386 to 387, serine 405, alanine 423, and arginine 440 each bind acetyl-CoA; that span reads NY.

This sequence in the N-terminal section; belongs to the N-acetylglucosamine-1-phosphate uridyltransferase family. In the C-terminal section; belongs to the transferase hexapeptide repeat family. As to quaternary structure, homotrimer. Mg(2+) is required as a cofactor.

It is found in the cytoplasm. The enzyme catalyses alpha-D-glucosamine 1-phosphate + acetyl-CoA = N-acetyl-alpha-D-glucosamine 1-phosphate + CoA + H(+). The catalysed reaction is N-acetyl-alpha-D-glucosamine 1-phosphate + UTP + H(+) = UDP-N-acetyl-alpha-D-glucosamine + diphosphate. It participates in nucleotide-sugar biosynthesis; UDP-N-acetyl-alpha-D-glucosamine biosynthesis; N-acetyl-alpha-D-glucosamine 1-phosphate from alpha-D-glucosamine 6-phosphate (route II): step 2/2. The protein operates within nucleotide-sugar biosynthesis; UDP-N-acetyl-alpha-D-glucosamine biosynthesis; UDP-N-acetyl-alpha-D-glucosamine from N-acetyl-alpha-D-glucosamine 1-phosphate: step 1/1. It functions in the pathway bacterial outer membrane biogenesis; LPS lipid A biosynthesis. Functionally, catalyzes the last two sequential reactions in the de novo biosynthetic pathway for UDP-N-acetylglucosamine (UDP-GlcNAc). The C-terminal domain catalyzes the transfer of acetyl group from acetyl coenzyme A to glucosamine-1-phosphate (GlcN-1-P) to produce N-acetylglucosamine-1-phosphate (GlcNAc-1-P), which is converted into UDP-GlcNAc by the transfer of uridine 5-monophosphate (from uridine 5-triphosphate), a reaction catalyzed by the N-terminal domain. The sequence is that of Bifunctional protein GlmU from Escherichia coli O157:H7 (strain EC4115 / EHEC).